A 446-amino-acid polypeptide reads, in one-letter code: Putative F-box protein At1g32660 (446 aa).

Composition is skewed to basic and acidic residues over residues 1–12 and 43–57; these read MKRKDDDQEDRS and NKLE…NPSK. The interval 1 to 57 is disordered; it reads MKRKDDDQEDRSCSSASKLDPIPLDLKMATVPTKSHMKKSHQNKLEEDEKEDTNPSK. The F-box domain maps to 57-107; that stretch reads KLELDSLPLDLKMAILTRIPAKSLMKLRCVSKMWSSIIRSRGFIDSYYAIS.

The sequence is that of Putative F-box protein At1g32660 from Arabidopsis thaliana (Mouse-ear cress).